A 378-amino-acid chain; its full sequence is Alginate lyase (378 aa).

An N-terminal signal peptide occupies residues 1-28; it reads MQTPKLIRPTLLSMAIVSSMAWATGASA. Substrate-binding positions include 67-68, 140-141, and tyrosine 258; these read SK and HT.

Belongs to the polysaccharide lyase 5 family.

The protein localises to the periplasm. The catalysed reaction is Eliminative cleavage of alginate to give oligosaccharides with 4-deoxy-alpha-L-erythro-hex-4-enuronosyl groups at their non-reducing ends and beta-D-mannuronate at their reducing end.. In terms of biological role, catalyzes the depolymerization of alginate by cleaving the beta-1,4 glycosidic bond between two adjacent sugar residues via a beta-elimination mechanism. May serve to degrade mislocalized alginate that is trapped in the periplasmic space. This is Alginate lyase from Pseudomonas syringae pv. tomato (strain ATCC BAA-871 / DC3000).